We begin with the raw amino-acid sequence, 95 residues long: Cell division topological specificity factor (95 aa).

Belongs to the MinE family.

Its function is as follows. Prevents the cell division inhibition by proteins MinC and MinD at internal division sites while permitting inhibition at polar sites. This ensures cell division at the proper site by restricting the formation of a division septum at the midpoint of the long axis of the cell. The polypeptide is Cell division topological specificity factor (Psychrobacter cryohalolentis (strain ATCC BAA-1226 / DSM 17306 / VKM B-2378 / K5)).